A 181-amino-acid polypeptide reads, in one-letter code: PLAT domain-containing protein 1 (181 aa).

The signal sequence occupies residues 1–14 (MARRDVLLPFLLLL). The residue at position 15 (Ala15) is an N-acetylalanine. In terms of domain architecture, PLAT spans 29–156 (CVYTFYLRTG…SPYELTAVRN (128 aa)).

As to expression, expressed in root tips, pericycle cells, lateral root primordia, stomata, leaf vasculature, hydathodes and floral organs.

The protein resides in the endoplasmic reticulum. It localises to the plastid. Its subcellular location is the chloroplast. It is found in the plastoglobule. Its function is as follows. Positive regulator of abiotic stress tolerance involved in the regulation of plant growth. May be a downstream target of the abscisic acid (ABA) signaling pathway. In Arabidopsis thaliana (Mouse-ear cress), this protein is PLAT domain-containing protein 1.